A 227-amino-acid polypeptide reads, in one-letter code: PKHD-type hydroxylase Patl_2273 (227 aa).

The Fe2OG dioxygenase domain occupies 78-178 (KIYPPKFNRY…RTASFFWIES (101 aa)). Fe cation is bound by residues H96, D98, and H159. Position 169 (R169) interacts with 2-oxoglutarate.

The cofactor is Fe(2+). It depends on L-ascorbate as a cofactor.

The polypeptide is PKHD-type hydroxylase Patl_2273 (Pseudoalteromonas atlantica (strain T6c / ATCC BAA-1087)).